Here is a 431-residue protein sequence, read N- to C-terminus: Keratin, type I cytoskeletal 40 (431 aa).

The tract at residues 1–89 (MTSDCSSTHC…CEDGVFTSNE (89 aa)) is head. The IF rod domain occupies 89–400 (EKETMQFLND…GLLDSEDSRL (312 aa)). The coil 1A stretch occupies residues 90–124 (KETMQFLNDRLASYLEKVRSLEETNAELESRIQEQ). The linker 1 stretch occupies residues 125 to 135 (CEQDIPMVCPD). The coil 1B stretch occupies residues 136-236 (YQRYFNTIED…HEEEVNLLRE (101 aa)). The tract at residues 237 to 252 (QLGDRLSVELDTAPTL) is linker 12. A coil 2 region spans residues 253 to 396 (DLNRVLDEMR…NTYWGLLDSE (144 aa)). Positions 397 to 431 (DSRLSCSPCSTTCTSSNTCEPCSAYVICTVENCCL) are tail.

It belongs to the intermediate filament family. In terms of assembly, heterotetramer of two type I and two type II keratins. In terms of tissue distribution, expressed in skin and scalp. Also very weakly expressed in tongue, breast, colon and small intestine. In the hair follicle, it is specifically present in the upper hair cuticle. Not present in the upper cortex (at protein level).

Functionally, may play a role in late hair differentiation. The chain is Keratin, type I cytoskeletal 40 (KRT40) from Homo sapiens (Human).